Here is a 608-residue protein sequence, read N- to C-terminus: Elongation factor 4 (608 aa).

Residues 11-193 form the tr-type G domain; that stretch reads KKIRNFSIIA…QIVEKVPEPS (183 aa). GTP is bound by residues 23–28 and 140–143; these read DHGKST and NKID.

It belongs to the TRAFAC class translation factor GTPase superfamily. Classic translation factor GTPase family. LepA subfamily.

It is found in the cell membrane. It carries out the reaction GTP + H2O = GDP + phosphate + H(+). Required for accurate and efficient protein synthesis under certain stress conditions. May act as a fidelity factor of the translation reaction, by catalyzing a one-codon backward translocation of tRNAs on improperly translocated ribosomes. Back-translocation proceeds from a post-translocation (POST) complex to a pre-translocation (PRE) complex, thus giving elongation factor G a second chance to translocate the tRNAs correctly. Binds to ribosomes in a GTP-dependent manner. The sequence is that of Elongation factor 4 from Listeria welshimeri serovar 6b (strain ATCC 35897 / DSM 20650 / CCUG 15529 / CIP 8149 / NCTC 11857 / SLCC 5334 / V8).